We begin with the raw amino-acid sequence, 1407 residues long: DNA-directed RNA polymerase subunit beta' (1407 aa).

Residues C70, C72, C85, and C88 each contribute to the Zn(2+) site. D460, D462, and D464 together coordinate Mg(2+). The Zn(2+) site is built by C814, C888, C895, and C898.

The protein belongs to the RNA polymerase beta' chain family. In terms of assembly, the RNAP catalytic core consists of 2 alpha, 1 beta, 1 beta' and 1 omega subunit. When a sigma factor is associated with the core the holoenzyme is formed, which can initiate transcription. The cofactor is Mg(2+). Zn(2+) serves as cofactor.

The enzyme catalyses RNA(n) + a ribonucleoside 5'-triphosphate = RNA(n+1) + diphosphate. In terms of biological role, DNA-dependent RNA polymerase catalyzes the transcription of DNA into RNA using the four ribonucleoside triphosphates as substrates. The sequence is that of DNA-directed RNA polymerase subunit beta' from Salmonella paratyphi A (strain ATCC 9150 / SARB42).